A 247-amino-acid chain; its full sequence is Protein FAM133B (247 aa).

Disordered stretches follow at residues 19-38 (SRGPIQSSGPTIQDYLNRPR) and 70-247 (KKEL…PDSP). Basic and acidic residues predominate over residues 70–80 (KKELEKHREKL). The residue at position 82 (Ser82) is a Phosphoserine. Positions 89 to 102 (KKRQRKKKEKKKSG) are enriched in basic residues. Over residues 103–119 (RYSSSSSSSSDSSSSSS) the composition is skewed to low complexity. Basic residues predominate over residues 128-140 (QGKRRKKKKNRSH). Over residues 165–176 (KDGTEKEKDIKG) the composition is skewed to basic and acidic residues. Phosphoserine occurs at positions 191, 192, 194, and 196. Residues 211-221 (SSEEREKATEK) show a composition bias toward basic and acidic residues. Residues 222–239 (TKKKKKHKKHSKKKKKKA) show a composition bias toward basic residues.

The protein belongs to the FAM133 family.

The polypeptide is Protein FAM133B (FAM133B) (Homo sapiens (Human)).